A 110-amino-acid polypeptide reads, in one-letter code: UPF0122 protein lin1916 (110 aa).

The protein belongs to the UPF0122 family.

Might take part in the signal recognition particle (SRP) pathway. This is inferred from the conservation of its genetic proximity to ftsY/ffh. May be a regulatory protein. In Listeria innocua serovar 6a (strain ATCC BAA-680 / CLIP 11262), this protein is UPF0122 protein lin1916.